We begin with the raw amino-acid sequence, 342 residues long: Dihydroorotate dehydrogenase (quinone) (342 aa).

Residues 65–69 (AGLDK) and Thr-89 each bind FMN. Lys-69 contributes to the substrate binding site. 114-118 (NRMGF) serves as a coordination point for substrate. FMN is bound by residues Asn-142 and Asn-175. Asn-175 is a binding site for substrate. Ser-178 functions as the Nucleophile in the catalytic mechanism. Asn-180 contacts substrate. Residues Lys-220 and Thr-248 each coordinate FMN. 249 to 250 (NT) serves as a coordination point for substrate. FMN-binding positions include Gly-271, Gly-300, and 321–322 (YT).

The protein belongs to the dihydroorotate dehydrogenase family. Type 2 subfamily. Monomer. It depends on FMN as a cofactor.

The protein resides in the cell membrane. It catalyses the reaction (S)-dihydroorotate + a quinone = orotate + a quinol. Its pathway is pyrimidine metabolism; UMP biosynthesis via de novo pathway; orotate from (S)-dihydroorotate (quinone route): step 1/1. Its function is as follows. Catalyzes the conversion of dihydroorotate to orotate with quinone as electron acceptor. The polypeptide is Dihydroorotate dehydrogenase (quinone) (Burkholderia pseudomallei (strain 668)).